The primary structure comprises 310 residues: Methionyl-tRNA formyltransferase (310 aa).

Residue 109–112 (SLLP) coordinates (6S)-5,6,7,8-tetrahydrofolate.

Belongs to the Fmt family.

It carries out the reaction L-methionyl-tRNA(fMet) + (6R)-10-formyltetrahydrofolate = N-formyl-L-methionyl-tRNA(fMet) + (6S)-5,6,7,8-tetrahydrofolate + H(+). Functionally, attaches a formyl group to the free amino group of methionyl-tRNA(fMet). The formyl group appears to play a dual role in the initiator identity of N-formylmethionyl-tRNA by promoting its recognition by IF2 and preventing the misappropriation of this tRNA by the elongation apparatus. The protein is Methionyl-tRNA formyltransferase of Parvibaculum lavamentivorans (strain DS-1 / DSM 13023 / NCIMB 13966).